Consider the following 619-residue polypeptide: MKSLLDSLNFPKDLKNLSDSDTEILSKEIRQFLIESVSKTGGHLSSNLGVVELTLSLMKSFDFEKDKIVWDVGHQSYVYKILTGRKDGFKNLRQFNGLSGFPKRNESKYDYFDTGHSSTSISAGLGMARARDLKGEKYTVVSVIGDGALTGGMALEALNDVGFRKTKMVIILNDNQMSISVNVGGLSRYLNKLRMGETYNRLKTNINTSLGSSDLGKDLISKMSKVKDSIKQLVVPSMFFENMGVKYIGPIDGHDIKAMNEVFSKVKDIEGPVIIHTVTQKGRGYSLAEKSPSKYHGIPPSNDKKEEPNKACRDSYSKAFGNALIDIAKEEKEVVAITAAMPDGTGLKDFATTYPERFFDVGIAEQHAVTLAAGMAANGLKPVFAVYSTFLQRGFDQVIHDVCIQDLPVTFAIDRAGIVGDDGETHQGIMDVSYLSMMPNMTIVAPKCTEEIPSMLRWAIKKNSPVAIRYPRGKDIVCNLDALQEISYGKWEVVSEGKKICIIASGRMLQHALLAKEILKEKGIDPKIVNATFIKPIDKCLLENLKEDGYDILTIEDNIICGGLGISILEYLNYIDYNGNMKLLGYNDEFIPQGNVEILYRTYGLDPVSISNTILKFYN.

Thiamine diphosphate is bound by residues His74 and 115–117 (GHS). Asp146 serves as a coordination point for Mg(2+). Residues 147–148 (GA), Asn175, and Tyr285 each bind thiamine diphosphate. Asn175 serves as a coordination point for Mg(2+). Residues 289-310 (EKSPSKYHGIPPSNDKKEEPNK) are disordered. Position 365 (Glu365) interacts with thiamine diphosphate.

The protein belongs to the transketolase family. DXPS subfamily. As to quaternary structure, homodimer. It depends on Mg(2+) as a cofactor. Thiamine diphosphate is required as a cofactor.

It catalyses the reaction D-glyceraldehyde 3-phosphate + pyruvate + H(+) = 1-deoxy-D-xylulose 5-phosphate + CO2. Its pathway is metabolic intermediate biosynthesis; 1-deoxy-D-xylulose 5-phosphate biosynthesis; 1-deoxy-D-xylulose 5-phosphate from D-glyceraldehyde 3-phosphate and pyruvate: step 1/1. Functionally, catalyzes the acyloin condensation reaction between C atoms 2 and 3 of pyruvate and glyceraldehyde 3-phosphate to yield 1-deoxy-D-xylulose-5-phosphate (DXP). In Clostridium botulinum (strain Alaska E43 / Type E3), this protein is 1-deoxy-D-xylulose-5-phosphate synthase.